The chain runs to 490 residues: uncharacterized protein (490 aa).

A signal peptide spans 1–19; it reads MSITSVSLYVYLICAGGHA.

Belongs to the mimivirus L137 family.

This is an uncharacterized protein from Acanthamoeba polyphaga (Amoeba).